A 340-amino-acid polypeptide reads, in one-letter code: DNA-directed RNA polymerase subunit alpha (340 aa).

Positions 1 to 236 (MLSLSKNWNT…EQLQLFISFE (236 aa)) are alpha N-terminal domain (alpha-NTD). Residues 251–340 (FSPYLLKRVD…LSKRYEDSYN (90 aa)) are alpha C-terminal domain (alpha-CTD).

It belongs to the RNA polymerase alpha chain family. In terms of assembly, homodimer. The RNAP catalytic core consists of 2 alpha, 1 beta, 1 beta' and 1 omega subunit. When a sigma factor is associated with the core the holoenzyme is formed, which can initiate transcription.

The enzyme catalyses RNA(n) + a ribonucleoside 5'-triphosphate = RNA(n+1) + diphosphate. Its function is as follows. DNA-dependent RNA polymerase catalyzes the transcription of DNA into RNA using the four ribonucleoside triphosphates as substrates. The sequence is that of DNA-directed RNA polymerase subunit alpha from Rickettsia conorii (strain ATCC VR-613 / Malish 7).